A 544-amino-acid chain; its full sequence is Chaperonin GroEL (544 aa).

Residues 30–33 (TLGP), K51, 87–91 (DGTTT), G415, 479–481 (NAA), and D495 each bind ATP.

It belongs to the chaperonin (HSP60) family. As to quaternary structure, forms a cylinder of 14 subunits composed of two heptameric rings stacked back-to-back. Interacts with the co-chaperonin GroES.

The protein localises to the cytoplasm. It catalyses the reaction ATP + H2O + a folded polypeptide = ADP + phosphate + an unfolded polypeptide.. Its function is as follows. Together with its co-chaperonin GroES, plays an essential role in assisting protein folding. The GroEL-GroES system forms a nano-cage that allows encapsulation of the non-native substrate proteins and provides a physical environment optimized to promote and accelerate protein folding. This chain is Chaperonin GroEL, found in Francisella tularensis subsp. mediasiatica (strain FSC147).